Here is a 257-residue protein sequence, read N- to C-terminus: uncharacterized protein (257 aa).

An ATP-binding site is contributed by 7 to 14; that stretch reads GKGGVGKT.

The protein to M.jannaschii MJ0084 and MJ0685.

This is an uncharacterized protein from Methanocaldococcus jannaschii (strain ATCC 43067 / DSM 2661 / JAL-1 / JCM 10045 / NBRC 100440) (Methanococcus jannaschii).